The chain runs to 254 residues: Vesicle transport protein USE1 (254 aa).

The Cytoplasmic portion of the chain corresponds to 1-228; it reads MAYISENELK…AYKCGYDCFK (228 aa). Residues 229-249 form a helical; Anchor for type IV membrane protein membrane-spanning segment; it reads VMLIVLIFMSFVSMVLMMKIF. The Lumenal segment spans residues 250-254; sequence KKAST.

Belongs to the USE1 family.

Its subcellular location is the endoplasmic reticulum membrane. SNARE that may be involved in targeting and fusion of Golgi-derived retrograde transport vesicles with the ER. In Caenorhabditis elegans, this protein is Vesicle transport protein USE1.